Here is a 1829-residue protein sequence, read N- to C-terminus: Sodium channel protein type 4 subunit alpha A (1829 aa).

Over 1–124 (MARLLPPTGT…RGAIKILIHS (124 aa)) the chain is Cytoplasmic. A disordered region spans residues 32–52 (STREELEGAEEEPQAPSSDLE). One copy of the I repeat lies at 106-421 (CISPFSIVRR…VVAMAYDEQN (316 aa)). A helical transmembrane segment spans residues 125-143 (LFSMFIMITILSNCVFMTM). At 144-150 (SNPPAWS) the chain is on the extracellular side. The chain crosses the membrane as a helical span at residues 151 to 171 (KTVEYVFTGIYTFEATVKVLS). At 172 to 185 (RGFCIGPFTFLRDP) the chain is on the cytoplasmic side. Residues 186–203 (WNWLDFMVISMAYVTEFV) form a helical membrane-spanning segment. Residues 204–209 (DLGNVS) lie on the Extracellular side of the membrane. N207 carries N-linked (GlcNAc...) asparagine glycosylation. A helical transmembrane segment spans residues 210-226 (ALRTFRVLRALKTITVI). Residues 227-245 (PGLKTIVGALIQSVKKMID) lie on the Cytoplasmic side of the membrane. A helical membrane pass occupies residues 246-265 (VMILTIFALAVFALIGLQLF). At 266 to 358 (MGNLRQKCIR…PNYGYTSYDN (93 aa)) the chain is on the extracellular side. Residues C273 and C327 are joined by a disulfide bond. N-linked (GlcNAc...) asparagine glycans are attached at residues N280, N293, and N329. C336 and C342 are disulfide-bonded. Positions 359–383 (FGWAFLALFRLMTQDFWENLFQLTL) form an intramembrane region, pore-forming. Residues 384–390 (RAAGKTY) lie on the Extracellular side of the membrane. A helical transmembrane segment spans residues 391–411 (MIFFVVVIFLGSFYLINLILA). Residues 412–582 (VVAMAYDEQN…KWVHFVVMDP (171 aa)) are Cytoplasmic-facing. Polar residues predominate over residues 446–467 (ETGSKASLASQKTQSRGSNRTG). A disordered region spans residues 446-468 (ETGSKASLASQKTQSRGSNRTGS). The II repeat unit spans residues 564 to 836 (CCAPWILFKK…QIAIGRITRG (273 aa)). A helical transmembrane segment spans residues 583–601 (FVDLGITICIVLNTLFMAM). At 602 to 612 (EHYPMSPHFEH) the chain is on the extracellular side. Residues 613-632 (VLSVGNLVFTGIFTAEMVFK) traverse the membrane as a helical segment. At 633-646 (LIAMDPYYYFQVGW) the chain is on the cytoplasmic side. Residues 647 to 666 (NIFDSIIVTLSLVELGLANV) form a helical membrane-spanning segment. Residues 667-668 (QG) lie on the Extracellular side of the membrane. The helical transmembrane segment at 669–686 (LSVLRSFRLLRVFKLAKS) threads the bilayer. The Cytoplasmic portion of the chain corresponds to 687–702 (WPTLNMLIKIIGNSVG). A helical membrane pass occupies residues 703 to 721 (ALGNLTLVLAIIVFIFAVV). Residues 722-750 (GMQLFGKSYKDCVCKISEDCELPRWHMND) are Extracellular-facing. An intrachain disulfide couples C735 to C741. The segment at residues 751-771 (FFHSFLIVFRILCGEWIETMW) is an intramembrane region (pore-forming). The Extracellular portion of the chain corresponds to 772–782 (DCMEVAGASMC). C773 and C782 are oxidised to a cystine. Residues 783–801 (LIVFMMVMVIGNLVVLNLF) form a helical membrane-spanning segment. The Cytoplasmic portion of the chain corresponds to 802 to 998 (LALLLSSFSG…TCFTIVEHDY (197 aa)). The disordered stretch occupies residues 901-957 (SDVEEDEDSESSDEEDAKATLNDGDSSVCSTVDYQPPEPEPEPEEVEEEEPEPEEPE). Over residues 902 to 916 (DVEEDEDSESSDEED) the composition is skewed to acidic residues. Residues 923 to 933 (DGDSSVCSTVD) show a composition bias toward polar residues. The segment covering 939-957 (PEPEPEEVEEEEPEPEEPE) has biased composition (acidic residues). The III repeat unit spans residues 979–1292 (WGKKWWNLRR…KKYYNAMKKL (314 aa)). A helical membrane pass occupies residues 999–1016 (FETFIIFMILLSSGALAF). Residues 1017–1029 (EDINIERRRVIKT) lie on the Extracellular side of the membrane. The helical transmembrane segment at 1030 to 1048 (ILEYADKVFTYIFIVEMLL) threads the bilayer. The Cytoplasmic portion of the chain corresponds to 1049–1062 (KWVAYGFKTYFTNA). The helical transmembrane segment at 1063-1081 (WCWLDFLIVDVSLVSLTAN) threads the bilayer. At 1082-1089 (LMGYSELG) the chain is on the extracellular side. A helical transmembrane segment spans residues 1090 to 1108 (AIKSLRTLRALRPLRALSR). Residues 1109 to 1125 (FEGMRVVVNALVGAIPS) are Cytoplasmic-facing. The helical transmembrane segment at 1126-1145 (IFNVLLVCLIFWLIFSIMGV) threads the bilayer. Over 1146 to 1196 (NLFAGKFYHCINTTTEERIPMDVVNNKSDCMALMYTNEVRWVNVKVNYDNV) the chain is Extracellular. C1155 and C1175 are disulfide-bonded. N-linked (GlcNAc...) asparagine glycans are attached at residues N1157 and N1171. The pore-forming intramembrane region spans 1197 to 1218 (GLGYLSLLQIATFKGWMDIMYA). Residues 1219–1235 (AVDSREVDEQPSYEINL) lie on the Extracellular side of the membrane. A helical transmembrane segment spans residues 1236–1257 (YMYLYFVIFIIFGSFFTLNLFI). The Cytoplasmic portion of the chain corresponds to 1258–1320 (GVIIDNFNQQ…LVFDFISKQF (63 aa)). Residues 1276–1278 (IFM) form an important for rapid channel inactivation region. An IV repeat occupies 1301-1599 (IPRPSNIIQG…WEKFDVDATQ (299 aa)). Residues 1321 to 1338 (FDIFIMVLICLNMVTMMI) traverse the membrane as a helical segment. Residues 1339 to 1349 (ETDDQSAEKEY) are Extracellular-facing. A helical transmembrane segment spans residues 1350 to 1368 (VLYQINLVFIVVFTSECVL). Topologically, residues 1369 to 1380 (KLFALRQYFFTI) are cytoplasmic. A helical transmembrane segment spans residues 1381–1398 (GWNVFDFVVVILSIAGLM). Topologically, residues 1399–1411 (LSDIIEKYFVSPT) are extracellular. A helical transmembrane segment spans residues 1412-1428 (LFRVIRLARIGRVLRLI). The Cytoplasmic portion of the chain corresponds to 1429-1447 (RGAKGIRTLLFALMMSLPA). The chain crosses the membrane as a helical span at residues 1448 to 1465 (LFNIGLLLFLIMFIFSIF). The Extracellular segment spans residues 1466–1487 (GMSNFAYVKKQAGIDDIFNFET). Residues 1488–1510 (FGGSIICLFEITTSAGWDGLLLP) constitute an intramembrane region (pore-forming). Residues 1511–1540 (ILNSGPPDCDPDFENPGTDVRGNCGNPGMG) are Extracellular-facing. A disulfide bond links C1519 and C1534. Residues 1541–1563 (IMFFCSYIIMSFLVVVNMYIAII) traverse the membrane as a helical segment. The Cytoplasmic segment spans residues 1564-1829 (LENFNNAQEE…NATTIKESIV (266 aa)). The IQ domain occupies 1693-1722 (EERAAIAVQRIYRRHLLKRAIRYACFMRRS). A disordered region spans residues 1765–1786 (PMRPNSQPPKPSQVTQTRASVT).

It belongs to the sodium channel (TC 1.A.1.10) family. Nav1.4/SCN4A subfamily. As to quaternary structure, voltage-gated sodium (Nav) channels consist of an ion-conducting alpha subunit which is functional on its own associated with regulatory beta subunits. As to expression, expressed in skeletal muscle, brain, spinal cord, and eye.

The protein resides in the cell membrane. It catalyses the reaction Na(+)(in) = Na(+)(out). Its function is as follows. Pore-forming subunit of a voltage-gated sodium (Nav) channel that directly mediates the depolarizing phase of action potentials in excitable membranes. Navs, also called VGSCs (voltage-gated sodium channels) or VDSCs (voltage-dependent sodium channels), operate by switching between closed and open conformations depending on the voltage difference across the membrane. In the open conformation they allow Na(+) ions to selectively pass through the pore, along their electrochemical gradient. The influx of Na+ ions provokes membrane depolarization, initiating the propagation of electrical signals throughout cells and tissues. The protein is Sodium channel protein type 4 subunit alpha A (scn4aa) of Danio rerio (Zebrafish).